The primary structure comprises 86 residues: Putative membrane protein insertion efficiency factor (86 aa).

A disordered region spans residues 64 to 86 (GVDPVPKKSSSKTSTTACGCGHS). The segment covering 70–79 (KKSSSKTSTT) has biased composition (low complexity).

Belongs to the UPF0161 family.

It localises to the cell inner membrane. Functionally, could be involved in insertion of integral membrane proteins into the membrane. The chain is Putative membrane protein insertion efficiency factor from Janthinobacterium sp. (strain Marseille) (Minibacterium massiliensis).